Consider the following 299-residue polypeptide: Methionine aminopeptidase (299 aa).

Substrate is bound at residue His64. Asp84, Asp95, and His158 together coordinate a divalent metal cation. Residue His166 participates in substrate binding. Residues Glu191 and Glu284 each coordinate a divalent metal cation.

This sequence belongs to the peptidase M24A family. Methionine aminopeptidase archaeal type 2 subfamily. Monomer. It depends on Co(2+) as a cofactor. Zn(2+) is required as a cofactor. The cofactor is Mn(2+). Requires Fe(2+) as cofactor.

The enzyme catalyses Release of N-terminal amino acids, preferentially methionine, from peptides and arylamides.. Its function is as follows. Removes the N-terminal methionine from nascent proteins. The N-terminal methionine is often cleaved when the second residue in the primary sequence is small and uncharged (Met-Ala-, Cys, Gly, Pro, Ser, Thr, or Val). The chain is Methionine aminopeptidase from Methanothermobacter thermautotrophicus (strain ATCC 29096 / DSM 1053 / JCM 10044 / NBRC 100330 / Delta H) (Methanobacterium thermoautotrophicum).